The primary structure comprises 323 residues: tRNA dimethylallyltransferase (323 aa).

12-19 (GPTAAGKT) provides a ligand contact to ATP. 14 to 19 (TAAGKT) is a binding site for substrate. Interaction with substrate tRNA stretches follow at residues 37–40 (DSAL) and 161–165 (QRLIR).

This sequence belongs to the IPP transferase family. As to quaternary structure, monomer. Requires Mg(2+) as cofactor.

It catalyses the reaction adenosine(37) in tRNA + dimethylallyl diphosphate = N(6)-dimethylallyladenosine(37) in tRNA + diphosphate. Its function is as follows. Catalyzes the transfer of a dimethylallyl group onto the adenine at position 37 in tRNAs that read codons beginning with uridine, leading to the formation of N6-(dimethylallyl)adenosine (i(6)A). The polypeptide is tRNA dimethylallyltransferase (Pseudomonas putida (strain GB-1)).